Here is a 472-residue protein sequence, read N- to C-terminus: Glutamate--tRNA ligase (472 aa).

The short motif at 18 to 28 is the 'HIGH' region element; it reads PSPTGYLHIGG. Basic and acidic residues predominate over residues 122-138; that stretch reads RARGEKPRYDGRWRPEP. Residues 122-150 are disordered; that stretch reads RARGEKPRYDGRWRPEPGKTLPVPPSGVQ. The 'KMSKS' region signature appears at 250–254; it reads KLSKR. K253 contributes to the ATP binding site.

This sequence belongs to the class-I aminoacyl-tRNA synthetase family. Glutamate--tRNA ligase type 1 subfamily. In terms of assembly, monomer.

Its subcellular location is the cytoplasm. It catalyses the reaction tRNA(Glu) + L-glutamate + ATP = L-glutamyl-tRNA(Glu) + AMP + diphosphate. Its function is as follows. Catalyzes the attachment of glutamate to tRNA(Glu) in a two-step reaction: glutamate is first activated by ATP to form Glu-AMP and then transferred to the acceptor end of tRNA(Glu). This Thiobacillus denitrificans (strain ATCC 25259 / T1) protein is Glutamate--tRNA ligase.